The primary structure comprises 479 residues: Tegument protein VP16 homolog (479 aa).

It belongs to the herpesviridae tegument protein VP16 protein family. In terms of assembly, associates with the VP16-induced complex; binding to host HCFC1 activates VP16 for association with the octamer motif-binding host protein POU2F1, to form a multiprotein-DNA complex responsible for activating transcription of the viral immediate early genes.

It localises to the virion tegument. The protein resides in the host nucleus. Its function is as follows. Transcriptional activator of immediate-early (IE) gene products (alpha genes). Acts as a key activator of lytic infection by initiating the lytic program through the assembly of the transcriptional regulatory VP16-induced complex composed of VP16 and two cellular factors, HCFC1 and POU2F1. VP16-induced complex represents a regulatory switch: when it is on, it promotes IE-gene expression and thus lytic infection, and when it is off, it limits IE-gene transcription favoring latent infection. In terms of biological role, may play a role in the aggregation of tegument proteins around nucleocapsids during virus morphogenesis. This is Tegument protein VP16 homolog from Equus caballus (Horse).